The chain runs to 533 residues: MKYIFVTGGVVSSLGKGITSSSLGRLLKARGLNVNMIKIDPYLQIDAGTMSPFEHGEVFVTDDGGETDLDLGNYERFVDIGLKADNNITTGKIYWSVLSKERKGDYLGKTVQVIPHITNEIKDRIKNLGKESDITIIEIGGTVGDIESLPFLEAIRQFKKDVGKENVLYIHVSLLPYIRSAGELKTKPTQHSVKELKGIGIQPDILVCRSEIPISEKIKDKLALFCDVEKEAVIECKDARTIYEVPLNLEKEGLGKLVTEKLNLRDSTPDLTEWRAIVDRIINPMNEITIGIVGKYIELKDSYMSIMEALGHAGAKNDTKVNIAWINSEELETKNYEEILNKMVDDEKLHGILVPGGFGDRGIDGKVNAVRYAREKNIPFLGICLGMQCAVIEFARHVCGLNANSTEFDEETEHPVIDYIPEQREVTEKGGTMRLGAYPAVLTENSLASELYGSINASERHRHRYEVNPEYHEILKKNGLIISGMSPDGKLAEFIELENHKYFIATQAHPEFKSRPNKPHPLFHGLVKASIEK.

The interval methionine 1–leucine 264 is amidoligase domain. Serine 12 serves as a coordination point for CTP. Serine 12 provides a ligand contact to UTP. Residues serine 13–isoleucine 18 and aspartate 70 contribute to the ATP site. Mg(2+) contacts are provided by aspartate 70 and glutamate 138. Residues aspartate 145–glutamate 147, lysine 185–glutamine 190, and lysine 221 each bind CTP. UTP contacts are provided by residues lysine 185 to glutamine 190 and lysine 221. Lysine 237–alanine 239 provides a ligand contact to ATP. Positions threonine 289 to lysine 533 constitute a Glutamine amidotransferase type-1 domain. Glycine 357 contributes to the L-glutamine binding site. Cysteine 384 serves as the catalytic Nucleophile; for glutamine hydrolysis. L-glutamine contacts are provided by residues leucine 385 to glutamine 388, glutamate 407, and arginine 464. Residues histidine 509 and glutamate 511 contribute to the active site.

It belongs to the CTP synthase family. In terms of assembly, homotetramer.

The catalysed reaction is UTP + L-glutamine + ATP + H2O = CTP + L-glutamate + ADP + phosphate + 2 H(+). It carries out the reaction L-glutamine + H2O = L-glutamate + NH4(+). The enzyme catalyses UTP + NH4(+) + ATP = CTP + ADP + phosphate + 2 H(+). The protein operates within pyrimidine metabolism; CTP biosynthesis via de novo pathway; CTP from UDP: step 2/2. Its activity is regulated as follows. Allosterically activated by GTP, when glutamine is the substrate; GTP has no effect on the reaction when ammonia is the substrate. The allosteric effector GTP functions by stabilizing the protein conformation that binds the tetrahedral intermediate(s) formed during glutamine hydrolysis. Inhibited by the product CTP, via allosteric rather than competitive inhibition. Catalyzes the ATP-dependent amination of UTP to CTP with either L-glutamine or ammonia as the source of nitrogen. Regulates intracellular CTP levels through interactions with the four ribonucleotide triphosphates. The sequence is that of CTP synthase from Methanococcus maripaludis (strain DSM 14266 / JCM 13030 / NBRC 101832 / S2 / LL).